A 229-amino-acid polypeptide reads, in one-letter code: Flagellar brake protein YcgR (229 aa).

A PilZ domain is found at 134 to 218 (QLSLRVLDVS…GERALQRYID (85 aa)).

This sequence belongs to the YcgR family. In terms of assembly, monomer. Interacts with the flagellar basal bodies.

It localises to the bacterial flagellum basal body. Functionally, acts as a flagellar brake, regulating swimming and swarming in a bis-(3'-5') cyclic diguanylic acid (c-di-GMP)-dependent manner. Binds 1 c-di-GMP dimer per subunit. Increasing levels of c-di-GMP lead to decreased motility. The polypeptide is Flagellar brake protein YcgR (Methylibium petroleiphilum (strain ATCC BAA-1232 / LMG 22953 / PM1)).